Reading from the N-terminus, the 416-residue chain is Phosphatidylinositol 5-phosphate 4-kinase type-2 beta (416 aa).

An N-acetylserine modification is found at Ser-2. A Phosphothreonine modification is found at Thr-8. Ser-19 is modified (phosphoserine). Residues 38–415 (ASEPILSVLM…RFNEFMSNIL (378 aa)) enclose the PIPK domain. Residues 64-70 (VMLMPDD) form a required for interaction with PIP5K1A region. N6-acetyllysine occurs at positions 94 and 150. ATP contacts are provided by residues 202–204 (RNV) and Lys-214. Residues 203–204 (NV) and Lys-214 each bind GTP. Thr-322 bears the Phosphothreonine mark. At Ser-326 the chain carries Phosphoserine. Position 369 (Asp-369) interacts with GTP.

In terms of assembly, homodimer. Binds TNFRSF1A. Interacts with PIP4K2A; the interaction suppresses ubiquitination by the SPOP/CUL3 complex. Probably interacts with PIP5K1A; the interaction inhibits PIP5K1A kinase activity. Ubiquitinated by the SPOP/CUL3 complex. Ubiquitination is stimulated by PtdIns5P levels. In terms of processing, phosphorylated on serine residues.

The protein resides in the endoplasmic reticulum membrane. It localises to the cell membrane. It is found in the nucleus. The protein localises to the cytoplasm. It catalyses the reaction a 1,2-diacyl-sn-glycero-3-phospho-(1D-myo-inositol-5-phosphate) + ATP = a 1,2-diacyl-sn-glycero-3-phospho-(1D-myo-inositol-4,5-bisphosphate) + ADP + H(+). The enzyme catalyses 1,2-dihexadecanoyl-sn-glycero-3-phospho-(1D-myo-inositol-5-phosphate) + ATP = 1,2-dihexadecanoyl-sn-glycero-3-phospho-(1D-myo-inositol-4,5-bisphosphate) + ADP + H(+). It carries out the reaction 1,2-dihexadecanoyl-sn-glycero-3-phospho-(1D-myo-inositol-5-phosphate) + GTP = 1,2-dihexadecanoyl-sn-glycero-3-phospho-(1D-myo-inositol-4,5-bisphosphate) + GDP + H(+). Its function is as follows. Participates in the biosynthesis of phosphatidylinositol 4,5-bisphosphate. Preferentially utilizes GTP, rather than ATP, for PI(5)P phosphorylation and its activity reflects changes in direct proportion to the physiological GTP concentration. Its GTP-sensing activity is critical for metabolic adaptation. In collaboration with PIP4K2A, has a role in mediating autophagy in times of nutrient stress. Required for autophagosome-lysosome fusion and the regulation of cellular lipid metabolism. PIP4Ks negatively regulate insulin signaling through a catalytic-independent mechanism. They interact with PIP5Ks and suppress PIP5K-mediated PtdIns(4,5)P2 synthesis and insulin-dependent conversion to PtdIns(3,4,5)P3. This chain is Phosphatidylinositol 5-phosphate 4-kinase type-2 beta, found in Mus musculus (Mouse).